A 508-amino-acid polypeptide reads, in one-letter code: Probable polyol transporter 3 (508 aa).

The next 12 membrane-spanning stretches (helical) occupy residues 21–41 (FAFG…YDTG), 60–80 (QIEV…LTAG), 90–110 (YTIA…GYGP), 120–140 (CIAG…SAEI), 147–167 (GFLT…GYVS), 178–198 (LGWR…AFGI), 280–300 (ILIA…EAVV), 318–338 (LLLA…IATF), 348–368 (LLLT…VSLT), 384–404 (IVST…ITWV), 418–438 (GASI…MSFL), and 448–468 (GVFF…FFML).

This sequence belongs to the major facilitator superfamily. Sugar transporter (TC 2.A.1.1) family.

It localises to the membrane. In terms of biological role, plasma membrane sugar-proton symporter. The polypeptide is Probable polyol transporter 3 (PLT3) (Arabidopsis thaliana (Mouse-ear cress)).